The chain runs to 212 residues: Transcription antitermination protein NusB (212 aa).

This sequence belongs to the NusB family.

Involved in transcription antitermination. Required for transcription of ribosomal RNA (rRNA) genes. Binds specifically to the boxA antiterminator sequence of the ribosomal RNA (rrn) operons. This chain is Transcription antitermination protein NusB, found in Gloeothece citriformis (strain PCC 7424) (Cyanothece sp. (strain PCC 7424)).